An 89-amino-acid chain; its full sequence is Large ribosomal subunit protein bL27 (89 aa).

The interval 1–22 (MAHTKKGGSSRNGRDSESKRLG) is disordered.

The protein belongs to the bacterial ribosomal protein bL27 family.

The sequence is that of Large ribosomal subunit protein bL27 from Brucella melitensis biotype 1 (strain ATCC 23456 / CCUG 17765 / NCTC 10094 / 16M).